Reading from the N-terminus, the 509-residue chain is Hexokinase-4, chloroplastic (509 aa).

Residues 1–37 (MSAAAAIASPIPAAIAVVQQQRRGRSRGGGSGAAAVR) constitute a chloroplast transit peptide. Residues 45–496 (SAIAPILADL…SGIGAALLAA (452 aa)) enclose the Hexokinase domain. The interval 100–238 (TGNETGLFYA…GLDMRVSALV (139 aa)) is hexokinase small subdomain. Residues Gly-114, Thr-115, and Asn-116 each contribute to the ADP site. 4 residues coordinate D-glucose: Thr-204, Lys-205, Asn-239, and Asp-240. The tract at residues 239-485 (NDTVGTLAGA…NRIAIEHTKD (247 aa)) is hexokinase large subdomain. Thr-263 contacts ADP. Asn-266, Glu-294, and Glu-324 together coordinate D-glucose. Residue Gly-450 coordinates ADP.

Belongs to the hexokinase family. Expressed in roots, leaves, flowers, immature seeds, endosperm and seed coat.

The protein localises to the plastid. The protein resides in the chloroplast stroma. It carries out the reaction a D-hexose + ATP = a D-hexose 6-phosphate + ADP + H(+). It catalyses the reaction D-fructose + ATP = D-fructose 6-phosphate + ADP + H(+). The enzyme catalyses D-glucose + ATP = D-glucose 6-phosphate + ADP + H(+). The protein operates within carbohydrate metabolism; hexose metabolism. Its pathway is carbohydrate degradation; glycolysis; D-glyceraldehyde 3-phosphate and glycerone phosphate from D-glucose: step 1/4. In terms of biological role, fructose and glucose phosphorylating enzyme. This is Hexokinase-4, chloroplastic (HXK4) from Oryza sativa subsp. japonica (Rice).